Consider the following 131-residue polypeptide: Large ribosomal subunit protein bL17 (131 aa).

The protein belongs to the bacterial ribosomal protein bL17 family. In terms of assembly, part of the 50S ribosomal subunit. Contacts protein L32.

The polypeptide is Large ribosomal subunit protein bL17 (Thermotoga maritima (strain ATCC 43589 / DSM 3109 / JCM 10099 / NBRC 100826 / MSB8)).